Here is a 231-residue protein sequence, read N- to C-terminus: Small ribosomal subunit protein uS3 (231 aa).

In terms of domain architecture, KH type-2 spans 39–107 (IRKFIKEKLF…QVSVNIVEIK (69 aa)).

The protein belongs to the universal ribosomal protein uS3 family. Part of the 30S ribosomal subunit. Forms a tight complex with proteins S10 and S14.

Its function is as follows. Binds the lower part of the 30S subunit head. Binds mRNA in the 70S ribosome, positioning it for translation. In Pelotomaculum thermopropionicum (strain DSM 13744 / JCM 10971 / SI), this protein is Small ribosomal subunit protein uS3.